The sequence spans 423 residues: Adenylosuccinate synthetase (423 aa).

GTP is bound by residues 13–19 (GDEGKGK) and 41–43 (GHT). The active-site Proton acceptor is aspartate 14. Mg(2+)-binding residues include aspartate 14 and glycine 41. Residues 14-17 (DEGK), 39-42 (NAGH), threonine 130, arginine 144, glutamine 223, threonine 238, and arginine 302 contribute to the IMP site. Histidine 42 (proton donor) is an active-site residue. 298-304 (SVTGRKR) is a binding site for substrate. GTP contacts are provided by residues arginine 304 and 410 to 412 (SVG).

This sequence belongs to the adenylosuccinate synthetase family. In terms of assembly, homodimer. Mg(2+) is required as a cofactor.

Its subcellular location is the cytoplasm. The enzyme catalyses IMP + L-aspartate + GTP = N(6)-(1,2-dicarboxyethyl)-AMP + GDP + phosphate + 2 H(+). It participates in purine metabolism; AMP biosynthesis via de novo pathway; AMP from IMP: step 1/2. Its function is as follows. Plays an important role in the de novo pathway of purine nucleotide biosynthesis. Catalyzes the first committed step in the biosynthesis of AMP from IMP. The sequence is that of Adenylosuccinate synthetase from Porphyromonas gingivalis (strain ATCC BAA-308 / W83).